Reading from the N-terminus, the 595-residue chain is Beta-lactamase-like protein ARB_00930 (595 aa).

A signal peptide spans 1–18 (MVVCFLWLLLPYAATTLS). N-linked (GlcNAc...) asparagine glycans are attached at residues asparagine 70 and asparagine 102. Serine 117 (acyl-ester intermediate) is an active-site residue. N-linked (GlcNAc...) asparagine glycosylation is found at asparagine 147, asparagine 156, and asparagine 195. The active-site Proton acceptor is the tyrosine 235. Residues asparagine 249, asparagine 461, and asparagine 473 are each glycosylated (N-linked (GlcNAc...) asparagine).

Belongs to the beta-lactamase family.

The protein localises to the secreted. It carries out the reaction a beta-lactam + H2O = a substituted beta-amino acid. This Arthroderma benhamiae (strain ATCC MYA-4681 / CBS 112371) (Trichophyton mentagrophytes) protein is Beta-lactamase-like protein ARB_00930.